The chain runs to 253 residues: Tetraspanin-3 (253 aa).

The Cytoplasmic segment spans residues 1-11 (MGQCGITSSKT). A helical membrane pass occupies residues 12–32 (VLVFLNLIFWGAAGILCYVGA). Residues 33-50 (YVFITYDDYDHFFEDVYT) are Extracellular-facing. Residues 51 to 71 (LIPAVVIIAVGALLFIIGLIG) traverse the membrane as a helical segment. Over 72–85 (CCATIRESRCGLAT) the chain is Cytoplasmic. A helical transmembrane segment spans residues 86-106 (FVIILLLVFVTEVVVVVLGYV). The Extracellular portion of the chain corresponds to 107–212 (YRAKVENEVD…KKLQEIMMHV (106 aa)). N-linked (GlcNAc...) asparagine glycans are attached at residues Asn-127, Asn-152, Asn-167, and Asn-183. A helical transmembrane segment spans residues 213-233 (IWAALAFAAIQLLGMLCACIV). Residues 234 to 253 (LCRRSRDPAYELLITGGAYA) lie on the Cytoplasmic side of the membrane.

This sequence belongs to the tetraspanin (TM4SF) family. In terms of assembly, interacts with claudin-11/CLDN11 and integrins.

The protein resides in the membrane. In terms of biological role, regulates the proliferation and migration of oligodendrocytes, a process essential for normal myelination and repair. This Bos taurus (Bovine) protein is Tetraspanin-3 (TSPAN3).